We begin with the raw amino-acid sequence, 175 residues long: Disulfide bond formation protein B (175 aa).

Over 1-13 (MSKLVTFSQQRSA) the chain is Cytoplasmic. The chain crosses the membrane as a helical span at residues 14 to 30 (WLILMFSALGLEASALY). Residues 31 to 48 (FQYVMLLDPCVMCIYIRV) lie on the Periplasmic side of the membrane. Residues C40 and C43 are joined by a disulfide bond. A helical transmembrane segment spans residues 49 to 64 (AVLGLILAGLVGSIAP). The Cytoplasmic portion of the chain corresponds to 65 to 71 (RFWIVRF). A helical membrane pass occupies residues 72–89 (LGMSLWGVSSAWGAKLSF). Residues 90–144 (ELYQMQANPSPFSTCSFYPEFPTWMPLDAWMPSIFMPTGMCSDIPWTMMSLSMTQ) lie on the Periplasmic side of the membrane. C104 and C130 are disulfide-bonded. Residues 145-163 (WTLIAFVGYSIAFLLFIYP) form a helical membrane-spanning segment. Over 164–175 (GLLYKKPTNPYS) the chain is Cytoplasmic.

This sequence belongs to the DsbB family.

The protein localises to the cell inner membrane. Required for disulfide bond formation in some periplasmic proteins. Acts by oxidizing the DsbA protein. The sequence is that of Disulfide bond formation protein B from Shewanella denitrificans (strain OS217 / ATCC BAA-1090 / DSM 15013).